A 276-amino-acid chain; its full sequence is Octanoyltransferase LipM (276 aa).

The BPL/LPL catalytic domain maps to 33–247 (GELKPTLRFY…GFKDAFSLTF (215 aa)). Cys-150 functions as the Acyl-thioester intermediate in the catalytic mechanism.

Belongs to the octanoyltransferase LipM family. Monomer.

It catalyses the reaction octanoyl-[ACP] + L-lysyl-[protein] = N(6)-octanoyl-L-lysyl-[protein] + holo-[ACP] + H(+). Its pathway is protein modification; protein lipoylation via endogenous pathway; protein N(6)-(lipoyl)lysine from octanoyl-[acyl-carrier-protein]. Catalyzes the transfer of endogenously produced octanoic acid from octanoyl-acyl-carrier-protein onto the lipoyl domain of GcvH, an intermediate carrier during protein lipoylation. The protein is Octanoyltransferase LipM of Exiguobacterium sp. (strain ATCC BAA-1283 / AT1b).